The following is a 380-amino-acid chain: Cytochrome b (380 aa).

The next 4 helical transmembrane spans lie at 34 to 54 (FGSLLGLCLIIQILTGLFLAM), 78 to 99 (WLIRNTHANGASMFFICVYLHI), 114 to 134 (WNIGVIILLLLMATAFVGYVL), and 179 to 199 (FFTFHFLLPFVIVALTMVHLL). Histidine 84 and histidine 98 together coordinate heme b. Residues histidine 183 and histidine 197 each contribute to the heme b site. Position 202 (histidine 202) interacts with a ubiquinone. The next 4 membrane-spanning stretches (helical) occupy residues 227-247 (YKDLLGFFILLFFLTFLALFT), 289-309 (LGGVLALAFSILILLLVPILH), 321-341 (ISQLLFWLLVANTIILTWIGG), and 348-368 (FITIGQIASITYFSFFLILFP).

It belongs to the cytochrome b family. As to quaternary structure, the cytochrome bc1 complex contains 3 respiratory subunits (MT-CYB, CYC1 and UQCRFS1), 2 core proteins (UQCRC1 and UQCRC2) and probably 6 low-molecular weight proteins. The cofactor is heme b.

The protein resides in the mitochondrion inner membrane. Functionally, component of the ubiquinol-cytochrome c reductase complex (complex III or cytochrome b-c1 complex) that is part of the mitochondrial respiratory chain. The b-c1 complex mediates electron transfer from ubiquinol to cytochrome c. Contributes to the generation of a proton gradient across the mitochondrial membrane that is then used for ATP synthesis. The protein is Cytochrome b (mt-cyb) of Pastinachus sephen (Cowtail stingray).